The sequence spans 146 residues: Hemoglobin subunit beta-C (146 aa).

One can recognise a Globin domain in the interval 2-146; the sequence is EWTDFERATI…VVSSLGRQYH (145 aa). Residues His-63 and His-92 each coordinate heme b.

The protein belongs to the globin family. HbC is a heterotetramer of two alpha chains and two beta-C chains. In terms of tissue distribution, red blood cells.

Its function is as follows. Involved in oxygen transport from gills to the various peripheral tissues. The sequence is that of Hemoglobin subunit beta-C (hbbc) from Trematomus bernacchii (Emerald rockcod).